A 156-amino-acid polypeptide reads, in one-letter code: 6,7-dimethyl-8-ribityllumazine synthase (156 aa).

Residues Phe-23, 57 to 59, and 81 to 83 contribute to the 5-amino-6-(D-ribitylamino)uracil site; these read AFE and AVI. Residue 86–87 coordinates (2S)-2-hydroxy-3-oxobutyl phosphate; that stretch reads AT. His-89 (proton donor) is an active-site residue. Phe-114 provides a ligand contact to 5-amino-6-(D-ribitylamino)uracil. Arg-128 lines the (2S)-2-hydroxy-3-oxobutyl phosphate pocket.

The protein belongs to the DMRL synthase family.

The catalysed reaction is (2S)-2-hydroxy-3-oxobutyl phosphate + 5-amino-6-(D-ribitylamino)uracil = 6,7-dimethyl-8-(1-D-ribityl)lumazine + phosphate + 2 H2O + H(+). It participates in cofactor biosynthesis; riboflavin biosynthesis; riboflavin from 2-hydroxy-3-oxobutyl phosphate and 5-amino-6-(D-ribitylamino)uracil: step 1/2. Its function is as follows. Catalyzes the formation of 6,7-dimethyl-8-ribityllumazine by condensation of 5-amino-6-(D-ribitylamino)uracil with 3,4-dihydroxy-2-butanone 4-phosphate. This is the penultimate step in the biosynthesis of riboflavin. The polypeptide is 6,7-dimethyl-8-ribityllumazine synthase (Campylobacter concisus (strain 13826)).